We begin with the raw amino-acid sequence, 304 residues long: Ribosomal protein L11 methyltransferase (304 aa).

4 residues coordinate S-adenosyl-L-methionine: threonine 156, glycine 177, aspartate 199, and asparagine 240.

Belongs to the methyltransferase superfamily. PrmA family.

The protein resides in the cytoplasm. It carries out the reaction L-lysyl-[protein] + 3 S-adenosyl-L-methionine = N(6),N(6),N(6)-trimethyl-L-lysyl-[protein] + 3 S-adenosyl-L-homocysteine + 3 H(+). Functionally, methylates ribosomal protein L11. This is Ribosomal protein L11 methyltransferase from Symbiobacterium thermophilum (strain DSM 24528 / JCM 14929 / IAM 14863 / T).